Here is a 121-residue protein sequence, read N- to C-terminus: Colipase-like protein 1 (121 aa).

An N-terminal signal peptide occupies residues 1–23; it reads MMLPQWLLLLFLLFFFLFLLTRG. 5 cysteine pairs are disulfide-bonded: C39–C50, C45–C61, C49–C83, C71–C91, and C85–C107.

The protein belongs to the colipase family. In terms of tissue distribution, exclusively expressed in epididymis, in the corpus region.

It is found in the secreted. The protein is Colipase-like protein 1 (CLPSL1) of Homo sapiens (Human).